A 292-amino-acid chain; its full sequence is NAD kinase (292 aa).

Catalysis depends on aspartate 73, which acts as the Proton acceptor. Residues 73-74 (DG), 147-148 (NE), histidine 158, arginine 175, aspartate 177, 188-193 (TGYSLS), and glutamine 247 contribute to the NAD(+) site.

The protein belongs to the NAD kinase family. Requires a divalent metal cation as cofactor.

It localises to the cytoplasm. It catalyses the reaction NAD(+) + ATP = ADP + NADP(+) + H(+). Functionally, involved in the regulation of the intracellular balance of NAD and NADP, and is a key enzyme in the biosynthesis of NADP. Catalyzes specifically the phosphorylation on 2'-hydroxyl of the adenosine moiety of NAD to yield NADP. This Buchnera aphidicola subsp. Acyrthosiphon pisum (strain 5A) protein is NAD kinase.